The primary structure comprises 374 residues: Homoserine O-acetyltransferase (374 aa).

An AB hydrolase-1 domain is found at 45–353 (NAILVLHALT…PYGHDAFLIE (309 aa)). The active-site Nucleophile is Ser151. Arg220 contacts substrate. Active-site residues include Asp314 and His347. Asp348 contacts substrate.

It belongs to the AB hydrolase superfamily. MetX family. In terms of assembly, homodimer.

It localises to the cytoplasm. The enzyme catalyses L-homoserine + acetyl-CoA = O-acetyl-L-homoserine + CoA. Its pathway is amino-acid biosynthesis; L-methionine biosynthesis via de novo pathway; O-acetyl-L-homoserine from L-homoserine: step 1/1. Transfers an acetyl group from acetyl-CoA to L-homoserine, forming acetyl-L-homoserine. This chain is Homoserine O-acetyltransferase, found in Moorella thermoacetica (strain ATCC 39073 / JCM 9320).